The sequence spans 250 residues: Phosphate import ATP-binding protein PstB (250 aa).

The region spanning 4–245 (LTARDLKLSF…PRHELTEKYV (242 aa)) is the ABC transporter domain. Residue 36–43 (GPSGSGKS) participates in ATP binding.

It belongs to the ABC transporter superfamily. Phosphate importer (TC 3.A.1.7) family. As to quaternary structure, the complex is composed of two ATP-binding proteins (PstB), two transmembrane proteins (PstC and PstA) and a solute-binding protein (PstS).

The protein localises to the cell membrane. The catalysed reaction is phosphate(out) + ATP + H2O = ADP + 2 phosphate(in) + H(+). Part of the ABC transporter complex PstSACB involved in phosphate import. Responsible for energy coupling to the transport system. The protein is Phosphate import ATP-binding protein PstB of Pyrobaculum aerophilum (strain ATCC 51768 / DSM 7523 / JCM 9630 / CIP 104966 / NBRC 100827 / IM2).